Reading from the N-terminus, the 457-residue chain is PDZ and LIM domain protein 7 (457 aa).

A PDZ domain is found at 1–85; the sequence is MDSFKVVLEG…RLSLGLSRAQ (85 aa). Ser78 is subject to Phosphoserine. Disordered stretches follow at residues 82 to 142, 176 to 226, and 239 to 258; these read SRAQ…LVPD, TEFM…PWAV, and TSTV…LQSR. Residue Arg103 is modified to Asymmetric dimethylarginine. Ser111 is modified (phosphoserine). The span at 208–221 shows a compositional bias: pro residues; it reads EPWPGPTAPSPTSR. The residue at position 247 (Ser247) is a Phosphoserine. 3 LIM zinc-binding domains span residues 280–338, 339–398, and 399–457; these read PVCH…VRYA, PSCA…MFGT, and KCHG…FSHV.

In terms of assembly, binds via its LIM zinc-binding 3 domain (LIM 3) to endocytic codes of INSR, but not with those of IGF1R, LDLR, TFRC, or EGFR. Interacts with various PKC isoforms through the LIM zinc-binding domains. Binds to RET in a phosphorylation-independent manner via its LIM zinc-binding domain 2 (LIM 2). Probably part of a complex with SHC and the RET dimer. Interacts with TPM2. Interacts with TBX4 and TBX5. As to expression, isoform 1 and isoform 2 are expressed ubiquitously, however, isoform 2 predominates in skeletal muscle, isoform 1 is more abundant in lung, spleen, leukocytes and fetal liver.

The protein resides in the cytoplasm. It is found in the cytoskeleton. Functionally, may function as a scaffold on which the coordinated assembly of proteins can occur. May play a role as an adapter that, via its PDZ domain, localizes LIM-binding proteins to actin filaments of both skeletal muscle and nonmuscle tissues. Involved in both of the two fundamental mechanisms of bone formation, direct bone formation (e.g. embryonic flat bones mandible and cranium), and endochondral bone formation (e.g. embryonic long bone development). Plays a role during fracture repair. Involved in BMP6 signaling pathway. This chain is PDZ and LIM domain protein 7 (PDLIM7), found in Homo sapiens (Human).